We begin with the raw amino-acid sequence, 169 residues long: S-ribosylhomocysteine lyase (169 aa).

3 residues coordinate Fe cation: His-54, His-58, and Cys-128.

Belongs to the LuxS family. As to quaternary structure, homodimer. Fe cation serves as cofactor.

It catalyses the reaction S-(5-deoxy-D-ribos-5-yl)-L-homocysteine = (S)-4,5-dihydroxypentane-2,3-dione + L-homocysteine. Involved in the synthesis of autoinducer 2 (AI-2) which is secreted by bacteria and is used to communicate both the cell density and the metabolic potential of the environment. The regulation of gene expression in response to changes in cell density is called quorum sensing. Catalyzes the transformation of S-ribosylhomocysteine (RHC) to homocysteine (HC) and 4,5-dihydroxy-2,3-pentadione (DPD). This chain is S-ribosylhomocysteine lyase, found in Shewanella sp. (strain MR-7).